Here is a 478-residue protein sequence, read N- to C-terminus: Catalase easC (478 aa).

Histidine 54 is a catalytic residue. Tyrosine 343 provides a ligand contact to heme. A disordered region spans residues 459-478 (VAEKARPDSPSRAQPGQLRL).

Belongs to the catalase family. Heme serves as cofactor.

Its pathway is alkaloid biosynthesis; ergot alkaloid biosynthesis. Functionally, catalase; part of the gene cluster that mediates the biosynthesis of fungal ergot alkaloid. DmaW catalyzes the first step of ergot alkaloid biosynthesis by condensing dimethylallyl diphosphate (DMAP) and tryptophan to form 4-dimethylallyl-L-tryptophan. The second step is catalyzed by the methyltransferase easF that methylates 4-dimethylallyl-L-tryptophan in the presence of S-adenosyl-L-methionine, resulting in the formation of 4-dimethylallyl-L-abrine. The catalase easC and the FAD-dependent oxidoreductase easE then transform 4-dimethylallyl-L-abrine to chanoclavine-I which is further oxidized by easD in the presence of NAD(+), resulting in the formation of chanoclavine-I aldehyde. Chanoclavine-I aldehyde is the precursor of ergoamides and ergopeptines in Clavicipitaceae, and clavine-type alcaloids such as fumiclavine in Trichocomaceae. However, the metabolites downstream of chanoclavine-I aldehyde in Arthrodermataceae have not been identified yet. The chain is Catalase easC from Trichophyton verrucosum (strain HKI 0517).